We begin with the raw amino-acid sequence, 301 residues long: 2-aminobenzoylacetyl-CoA thioesterase (301 aa).

His69, His71, Asp73, His74, His159, Asp178, and His221 together coordinate Fe cation.

It belongs to the metallo-beta-lactamase superfamily.

The catalysed reaction is (2-aminobenzoyl)acetyl-CoA + H2O = (2-aminobenzoyl)acetate + CoA + H(+). Its activity is regulated as follows. Thioesterase activity, but not pyocyanine production, is inhibited by 2-(pyridin-3-yl)benzoic acid, 2-(1H-pyrrol-1-yl)benzoic acid and 3-methylthiophene-2-carboxylic acid. Compounds bind to the active center. Functionally, required for the biosynthesis of the quorum-sensing signaling molecules 2-heptyl-4(1H)-quinolone (HHQ) and 2-heptyl-3-hydroxy-4(1H)-quinolone (Pseudomonas quinolone signal or PQS), which are important for biofilm formation and virulence. Catalyzes the hydrolysis of the intermediate 2-aminobenzoylacetyl-CoA (2-ABA-CoA) to form 2-aminobenzoylacetate (2-ABA), the precursor of HHQ. In vitro, can also hydrolyze other substrates such as S-ethyl-acetothioacetate and acetoacetyl-CoA, but is inactive against anthraniloyl-CoA, malonyl-CoA and octanoyl-CoA. Beyond its thioesterase function, is involved in the regulation of diverse genes coding for key virulence determinants and biofilm development. In Pseudomonas aeruginosa (strain ATCC 15692 / DSM 22644 / CIP 104116 / JCM 14847 / LMG 12228 / 1C / PRS 101 / PAO1), this protein is 2-aminobenzoylacetyl-CoA thioesterase.